The primary structure comprises 232 residues: DASH complex subunit DUO1 (232 aa).

Disordered stretches follow at residues 1 to 44 and 133 to 232; these read MADE…GGMR and ERRR…RGAK. Residues 128–171 adopt a coiled-coil conformation; that stretch reads ELEAEERRRQEEVERRAAEAERRREEARRKAEEEERRRAAAAAA. Over residues 133–165 the composition is skewed to basic and acidic residues; the sequence is ERRRQEEVERRAAEAERRREEARRKAEEEERRR. Low complexity-rich tracts occupy residues 167–183 and 191–213; these read AAAAAAAAPAGRSVGRG and GSGLTRGASSSASGSETTRTTSG.

Belongs to the DASH complex DUO1 family. As to quaternary structure, component of the DASH complex consisting of ASK1, DAD1, DAD2, DAD3, DAD4, DAM1, DUO1, HSK3, SPC19 and SPC34, with a stoichiometry of one copy of each subunit per complex. Multiple DASH complexes oligomerize to form a ring that encircles spindle microtubules and organizes the rod-like NDC80 complexes of the outer kinetochore. DASH complex oligomerization strengthens microtubule attachments. On cytoplasmic microtubules, DASH complexes appear to form patches instead of rings.

It localises to the nucleus. The protein localises to the cytoplasm. Its subcellular location is the cytoskeleton. It is found in the spindle pole. The protein resides in the chromosome. It localises to the centromere. The protein localises to the kinetochore. In terms of biological role, component of the DASH complex that connects microtubules with kinetochores and couples microtubule depolymerisation to chromosome movement; it is involved in retrieving kinetochores to the spindle poles before their re-orientation on the spindle in early mitosis and allows microtubule depolymerization to pull chromosomes apart and resist detachment during anaphase. Kinetochores, consisting of a centromere-associated inner segment and a microtubule-contacting outer segment, play a crucial role in chromosome segregation by mediating the physical connection between centromeric DNA and microtubules. Kinetochores also serve as an input point for the spindle assembly checkpoint, which delays anaphase until all chromosomes have bioriented on the mitotic spindle. In Chaetomium thermophilum (strain DSM 1495 / CBS 144.50 / IMI 039719) (Thermochaetoides thermophila), this protein is DASH complex subunit DUO1.